The following is a 103-amino-acid chain: Large ribosomal subunit protein bL21 (103 aa).

Belongs to the bacterial ribosomal protein bL21 family. As to quaternary structure, part of the 50S ribosomal subunit. Contacts protein L20.

Its function is as follows. This protein binds to 23S rRNA in the presence of protein L20. The protein is Large ribosomal subunit protein bL21 of Escherichia coli O127:H6 (strain E2348/69 / EPEC).